The chain runs to 178 residues: Adenine phosphoribosyltransferase (178 aa).

This sequence belongs to the purine/pyrimidine phosphoribosyltransferase family. Homodimer.

Its subcellular location is the cytoplasm. It carries out the reaction AMP + diphosphate = 5-phospho-alpha-D-ribose 1-diphosphate + adenine. It participates in purine metabolism; AMP biosynthesis via salvage pathway; AMP from adenine: step 1/1. Functionally, catalyzes a salvage reaction resulting in the formation of AMP, that is energically less costly than de novo synthesis. This Cereibacter sphaeroides (strain ATCC 17023 / DSM 158 / JCM 6121 / CCUG 31486 / LMG 2827 / NBRC 12203 / NCIMB 8253 / ATH 2.4.1.) (Rhodobacter sphaeroides) protein is Adenine phosphoribosyltransferase.